Here is a 656-residue protein sequence, read N- to C-terminus: MQSARMTPSVGRQLLRLGARSSRSTTVLQGQPRPISAQRLYAREATQAVLDKPETLSSDASTREKPARAESKSFAVGMFKGQLTIDQVFPYPSVLSEEQAQFLKELVGPVARFFEEVNDPAKNDALEKVEDDTLQGLKELGAFGLQVPSELGGLGLSNTQYARLAEIVGMHDLGVSVTLGAHQSIGFKGILLYGTKAQREKYLPRVASGQALAAFCLTEPSSGSDVASIRSSAIPSPCGKYYTLNGSKIWISNGGLADIFTVFAKTPIKDAATGAVKEKITAFVVERSFGGVTHGLPEKKMGIKASNTSEVYFDGVKVPSENVLGEVGDGFKVAVNILNNGRFGMAATLAGTMKSLIAKAVDHATNRTQFGDKIHNFGVIQEKLARMAILQYVTESMAYMLSANMDQGFKDFQIEAAISKIFCSEAAWKVADECIQIMGGMGFMKEPGVERVLRDIRIFRIFEGANDILRLFVALQGCMDKGKELTGLGNALKNPFGNVGLLMGEAGKQLRRRTGIGSGLSLSGIVHPELSRSGELAVQALDQFATVVEAKLVKHKKGIVNEQFLLQRLADGAIDLYAMVVVLSRASRSLSEGYPTAQHEKMLCDSWCIEAATRIRENMASLQSSPQHQELFRNFRSISKAMVENGGLVTGNPLGI.

Residues 1–33 (MQSARMTPSVGRQLLRLGARSSRSTTVLQGQPR) are disordered. The transit peptide at 1-41 (MQSARMTPSVGRQLLRLGARSSRSTTVLQGQPRPISAQRLY) directs the protein to the mitochondrion. A catalytic region spans residues 42-483 (AREATQAVLD…ALQGCMDKGK (442 aa)). At lysine 52 the chain carries N6-acetyllysine. N6-acetyllysine; alternate is present on residues lysine 72 and lysine 128. Lysine 72 and lysine 128 each carry N6-succinyllysine; alternate. Lysine 196 carries the post-translational modification N6-succinyllysine. 215–224 (FCLTEPSSGS) is a binding site for FAD. Position 238 is an S-nitrosocysteine (cysteine 238). Residue lysine 240 is modified to N6-acetyllysine; alternate. N6-succinyllysine; alternate is present on lysine 240. Residue 250 to 252 (WIS) participates in FAD binding. Lysine 269 is modified (N6-succinyllysine). Residues lysine 277 and lysine 279 each carry the N6-acetyllysine; alternate modification. N6-succinyllysine; alternate occurs at positions 277 and 279. N6-acetyllysine occurs at positions 299 and 317. N6-acetyllysine; alternate is present on lysine 332. N6-succinyllysine; alternate is present on lysine 332. N6-succinyllysine is present on lysine 373. Residue 462–464 (FEG) coordinates substrate. Glutamate 463 functions as the Proton acceptor in the catalytic mechanism. 465 to 467 (AND) provides a ligand contact to FAD. Lysine 483 carries the post-translational modification N6-acetyllysine; alternate. An N6-succinyllysine; alternate modification is found at lysine 483. A membrane-anchoring region spans residues 484–517 (ELTGLGNALKNPFGNVGLLMGEAGKQLRRRTGIG). Residues serine 518 and serine 523 each carry the phosphoserine modification. The residue at position 551 (lysine 551) is an N6-acetyllysine. N6-acetyllysine; alternate is present on lysine 557. Lysine 557 carries the post-translational modification N6-succinyllysine; alternate. Glutamine 563 serves as a coordination point for FAD. At lysine 640 the chain carries N6-succinyllysine.

Belongs to the acyl-CoA dehydrogenase family. Homodimer. Homodimerizes after import into the mitochondrion. The cofactor is FAD. S-nitrosylation at Cys-238 in liver improves catalytic efficiency.

It is found in the mitochondrion inner membrane. It catalyses the reaction a very-long-chain 2,3-saturated fatty acyl-CoA + oxidized [electron-transfer flavoprotein] + H(+) = a very-long-chain (2E)-enoyl-CoA + reduced [electron-transfer flavoprotein]. The catalysed reaction is dodecanoyl-CoA + oxidized [electron-transfer flavoprotein] + H(+) = (2E)-dodecenoyl-CoA + reduced [electron-transfer flavoprotein]. The enzyme catalyses tetradecanoyl-CoA + oxidized [electron-transfer flavoprotein] + H(+) = (2E)-tetradecenoyl-CoA + reduced [electron-transfer flavoprotein]. It carries out the reaction oxidized [electron-transfer flavoprotein] + hexadecanoyl-CoA + H(+) = (2E)-hexadecenoyl-CoA + reduced [electron-transfer flavoprotein]. It catalyses the reaction octadecanoyl-CoA + oxidized [electron-transfer flavoprotein] + H(+) = (2E)-octadecenoyl-CoA + reduced [electron-transfer flavoprotein]. The catalysed reaction is eicosanoyl-CoA + oxidized [electron-transfer flavoprotein] + H(+) = (2E)-eicosenoyl-CoA + reduced [electron-transfer flavoprotein]. The enzyme catalyses docosanoyl-CoA + oxidized [electron-transfer flavoprotein] + H(+) = (2E)-docosenoyl-CoA + reduced [electron-transfer flavoprotein]. It carries out the reaction tetracosanoyl-CoA + oxidized [electron-transfer flavoprotein] + H(+) = (2E)-tetracosenoyl-CoA + reduced [electron-transfer flavoprotein]. It functions in the pathway lipid metabolism; mitochondrial fatty acid beta-oxidation. In terms of biological role, very long-chain specific acyl-CoA dehydrogenase is one of the acyl-CoA dehydrogenases that catalyze the first step of mitochondrial fatty acid beta-oxidation, an aerobic process breaking down fatty acids into acetyl-CoA and allowing the production of energy from fats. The first step of fatty acid beta-oxidation consists in the removal of one hydrogen from C-2 and C-3 of the straight-chain fatty acyl-CoA thioester, resulting in the formation of trans-2-enoyl-CoA. Among the different mitochondrial acyl-CoA dehydrogenases, very long-chain specific acyl-CoA dehydrogenase acts specifically on acyl-CoAs with saturated 12 to 24 carbons long primary chains. This is Very long-chain specific acyl-CoA dehydrogenase, mitochondrial from Mus musculus (Mouse).